The following is a 123-amino-acid chain: MKTKLGFNRLSRKSSHRRALLKNMVISFFKHEKISSTKTKLFEVKRFAERLITRAKVDTVHNRRELSKFIHDKYILNKLFTKISPVFRQRSGGYTRMIKLGKRYGDAAEMAILELVEKPLKVE.

Belongs to the bacterial ribosomal protein bL17 family. In terms of assembly, part of the 50S ribosomal subunit. Contacts protein L32.

This chain is Large ribosomal subunit protein bL17, found in Borreliella burgdorferi (strain ZS7) (Borrelia burgdorferi).